The primary structure comprises 513 residues: Aspartyl protease family protein 1 (513 aa).

Positions 1–21 are cleaved as a signal peptide; that stretch reads MVWYSSCRILFLGLLILLASS. One can recognise a Peptidase A1 domain in the interval 104 to 445; the sequence is HYANVTVGTP…DREKLILGWK (342 aa). Residues D122 and D327 contribute to the active site. Positions 452 to 488 are disordered; it reads GETSARTLPSNRSSSSARPPASSFDPEATNIPSQRPN. The span at 455-474 shows a compositional bias: low complexity; it reads SARTLPSNRSSSSARPPASS. S484 is lipidated: GPI-anchor amidated serine. The propeptide at 485–513 is removed in mature form; it reads QRPNTSTTSAAYSLSISLSLFFFSILAIL.

This sequence belongs to the peptidase A1 family.

Its subcellular location is the cell membrane. In terms of biological role, aspartyl protease. Not able to cleave BAG6. The sequence is that of Aspartyl protease family protein 1 from Arabidopsis thaliana (Mouse-ear cress).